The sequence spans 926 residues: DNA mismatch repair protein MutS (926 aa).

Positions 16–40 are disordered; sequence VASTPTRRGRPPGSSAARASNGAGS. Low complexity predominate over residues 26 to 40; that stretch reads PPGSSAARASNGAGS. Residue 658–665 participates in ATP binding; sequence GPNMAGKS.

The protein belongs to the DNA mismatch repair MutS family.

Functionally, this protein is involved in the repair of mismatches in DNA. It is possible that it carries out the mismatch recognition step. This protein has a weak ATPase activity. This Granulibacter bethesdensis (strain ATCC BAA-1260 / CGDNIH1) protein is DNA mismatch repair protein MutS.